The primary structure comprises 98 residues: MTPVHFSFTSAFILGLMGLAFHRTHLLSALLCLEGMMLSLFIALSLWALQMEATGYSVAPMLLLAFSACEASAGLALLVATARTHGTDRLQSLNLLQC.

3 consecutive transmembrane segments (helical) span residues 1 to 21, 29 to 49, and 58 to 78; these read MTPV…GLAF, ALLC…LWAL, and VAPM…LALL.

The protein belongs to the complex I subunit 4L family.

The protein localises to the mitochondrion membrane. It carries out the reaction a ubiquinone + NADH + 5 H(+)(in) = a ubiquinol + NAD(+) + 4 H(+)(out). Its function is as follows. Core subunit of the mitochondrial membrane respiratory chain NADH dehydrogenase (Complex I) which catalyzes electron transfer from NADH through the respiratory chain, using ubiquinone as an electron acceptor. Part of the enzyme membrane arm which is embedded in the lipid bilayer and involved in proton translocation. This Oncorhynchus clarkii (Cutthroat trout) protein is NADH-ubiquinone oxidoreductase chain 4L (MT-ND4L).